The primary structure comprises 445 residues: Phosphoglucosamine mutase (445 aa).

The active-site Phosphoserine intermediate is Ser99. Mg(2+)-binding residues include Ser99, Asp242, Asp244, and Asp246. Ser99 carries the post-translational modification Phosphoserine.

The protein belongs to the phosphohexose mutase family. Mg(2+) serves as cofactor. Activated by phosphorylation.

The enzyme catalyses alpha-D-glucosamine 1-phosphate = D-glucosamine 6-phosphate. Functionally, catalyzes the conversion of glucosamine-6-phosphate to glucosamine-1-phosphate. The protein is Phosphoglucosamine mutase of Helicobacter acinonychis (strain Sheeba).